The sequence spans 378 residues: DNA replication and repair protein RecF (378 aa).

ATP is bound at residue 31 to 38 (GENGSGKT).

Belongs to the RecF family.

It localises to the cytoplasm. Functionally, the RecF protein is involved in DNA metabolism; it is required for DNA replication and normal SOS inducibility. RecF binds preferentially to single-stranded, linear DNA. It also seems to bind ATP. The polypeptide is DNA replication and repair protein RecF (Teredinibacter turnerae (strain ATCC 39867 / T7901)).